The primary structure comprises 542 residues: uncharacterized protein (542 aa).

The disordered stretch occupies residues 256-275 (KKSTTTSSPPITTTHLSKPE). Residues 258–269 (STTTSSPPITTT) are compositionally biased toward low complexity.

This is an uncharacterized protein from Caenorhabditis elegans.